The primary structure comprises 85 residues: Large ribosomal subunit protein bL27 (85 aa).

The disordered stretch occupies residues 1–22 (MAHKKAGGSTRNGRDSESKRLG).

It belongs to the bacterial ribosomal protein bL27 family.

This is Large ribosomal subunit protein bL27 from Teredinibacter turnerae (strain ATCC 39867 / T7901).